Reading from the N-terminus, the 48-residue chain is Photosystem II reaction center protein K (48 aa).

Residues 1 to 11 (MFLFNLEQSIG) constitute a propeptide that is removed on maturation. The helical transmembrane segment at 23-43 (LVDVLPIIPLLFLLLAFVWQA) threads the bilayer.

Belongs to the PsbK family. PSII is composed of 1 copy each of membrane proteins PsbA, PsbB, PsbC, PsbD, PsbE, PsbF, PsbH, PsbI, PsbJ, PsbK, PsbL, PsbM, PsbT, PsbX, PsbY, PsbZ, Psb30/Ycf12, at least 3 peripheral proteins of the oxygen-evolving complex and a large number of cofactors. It forms dimeric complexes.

Its subcellular location is the plastid. It is found in the chloroplast thylakoid membrane. Its function is as follows. One of the components of the core complex of photosystem II (PSII). PSII is a light-driven water:plastoquinone oxidoreductase that uses light energy to abstract electrons from H(2)O, generating O(2) and a proton gradient subsequently used for ATP formation. It consists of a core antenna complex that captures photons, and an electron transfer chain that converts photonic excitation into a charge separation. The protein is Photosystem II reaction center protein K of Lepocinclis buetschlii.